The following is a 266-amino-acid chain: Gasdermin bGSDM (266 aa).

A lipid anchor (S-palmitoyl cysteine) is attached at C4. Beta stranded transmembrane passes span 69–85 (INGQ…GINI), 97–114 (AGIE…FEFS), 163–180 (EFTV…QLDV), and 189–205 (GKLK…TVTY). Positions 238-266 (AMALDAAGGVMPSDSALLDEGGLLDLEGF) are C-terminal region.

This sequence belongs to the bacterial gasdermin family. As to quaternary structure, monomer in solution. Homooligomer; forms homooligomeric ring-shaped pores when inserted in membranes with 48-54 subunits per ring. Palmitoylation helps stabilize the inactive state; may self palmitoylate. Palmitoylation plays a significant role in pore formation.

The protein resides in the cytoplasm. The protein localises to the cell inner membrane. With respect to regulation, the full-length protein before cleavage is inactive: intramolecular interactions between the N-terminal domain and the C-terminal region as well as the lipid modification, mediate autoinhibition. The pyroptosis-like-inducing activity is carried by the released N-terminal domain (Gasdermin bGSDM, N-terminus). Its function is as follows. Precursor of a pore-forming protein involved in defense against bacteriophages. Expression of bGSDM and the neighboring protease gene (Ga0334635_1659) is toxic in E.coli. Cleavage of this precursor by its dedicated protease releases the active moiety (gasdermin bGSDM, N-terminus) which inserts into membranes, forming pores and triggering cell death. Pore-forming protein that causes membrane permeabilization, probably via a pyroptosis-like activity. Makes ring-like pores with an interior pore diameter of 200-300 Angstroms, when integrated in liposomes. The chain is Gasdermin bGSDM from Vitiosangium sp. (strain GDMCC 1.1324).